A 612-amino-acid chain; its full sequence is Peroxisomal carnitine O-octanoyltransferase (612 aa).

Met-1 is subject to N-acetylmethionine. Residues Lys-40 and Lys-57 each carry the N6-succinyllysine modification. His-327 acts as the Proton acceptor in catalysis. CoA contacts are provided by residues Lys-406 and 410 to 417 (KEEALHPD). Residue Lys-406 is modified to N6-acetyllysine; alternate. Lys-406 is modified (N6-succinyllysine; alternate). The (R)-carnitine site is built by Tyr-439, Thr-441, and Thr-452. Positions 610–612 (AHL) match the Microbody targeting signal motif.

The protein belongs to the carnitine/choline acetyltransferase family.

It localises to the peroxisome. It carries out the reaction octanoyl-CoA + (R)-carnitine = O-octanoyl-(R)-carnitine + CoA. The enzyme catalyses 4,8-dimethylnonanoyl-CoA + (R)-carnitine = O-4,8-dimethylnonanoyl-(R)-carnitine + CoA. Its pathway is lipid metabolism; fatty acid beta-oxidation. In terms of biological role, beta-oxidation of fatty acids. The highest activity concerns the C6 to C10 chain length substrate. In Mus musculus (Mouse), this protein is Peroxisomal carnitine O-octanoyltransferase (Crot).